The primary structure comprises 350 residues: Beta-hexosaminidase (350 aa).

Substrate contacts are provided by residues aspartate 73, arginine 81, arginine 148, and 178–179 (KH). Histidine 191 (proton donor/acceptor) is an active-site residue. Catalysis depends on aspartate 262, which acts as the Nucleophile.

This sequence belongs to the glycosyl hydrolase 3 family. NagZ subfamily.

The protein localises to the cytoplasm. The catalysed reaction is Hydrolysis of terminal non-reducing N-acetyl-D-hexosamine residues in N-acetyl-beta-D-hexosaminides.. The protein operates within cell wall biogenesis; peptidoglycan recycling. Plays a role in peptidoglycan recycling by cleaving the terminal beta-1,4-linked N-acetylglucosamine (GlcNAc) from peptide-linked peptidoglycan fragments, giving rise to free GlcNAc, anhydro-N-acetylmuramic acid and anhydro-N-acetylmuramic acid-linked peptides. The polypeptide is Beta-hexosaminidase (Bordetella avium (strain 197N)).